Consider the following 1063-residue polypeptide: Structural polyprotein (1063 aa).

Residues 1 to 131 (MASTTPITME…LGPPTNPFQA (131 aa)) are disordered. Residues 18–34 (AQSRALRAGLAAGASQS) are compositionally biased toward low complexity. The human C1QBP/SF2P32-binding stretch occupies residues 30–69 (GASQSRRPRPPRQRDSSTSGDDSGRDSGGPRRRRGNRGRG). S46 carries the post-translational modification Phosphoserine; by host. Over residues 59-69 (PRRRRGNRGRG) the composition is skewed to basic residues. Residues 70–87 (QRKDWSRAPPPPEERQES) are compositionally biased toward basic and acidic residues. Positions 93 to 107 (APKPSRAPPQQPQPP) are enriched in pro residues. C153 and C197 are oxidised to a cystine. Residues 279 to 300 (GAPQAFLAGLLLAAVAVGTARA) form a functions as E2 signal peptide region. Topologically, residues 301–534 (GLQPRADMAA…LWLATANALS (234 aa)) are extracellular. 4 N-linked (GlcNAc...) asparagine; by host glycosylation sites follow: N353, N371, N410, and N429. A helical transmembrane segment spans residues 535–555 (LDHAFAAFVLLVPWVLIFMVC). The Cytoplasmic segment spans residues 556–582 (RRACRRRGAAAALTAVVLQGYNPPAYG). A functions as E1 signal peptide region spans residues 563–582 (GAAAALTAVVLQGYNPPAYG). Topologically, residues 583–1028 (EEAFTYLCTA…QTWAEWAAAH (446 aa)) are extracellular. 8 disulfide bridges follow: C590/C595, C619/C824, C641/C653, C699/C712, C758/C767, C807/C817, C931/C934, and C950/C983. A glycan (N-linked (GlcNAc...) asparagine; by host) is linked at N658. Residues N670 and A671 each coordinate Ca(2+). 2 residues coordinate Ca(2+): D718 and T719. N-linked (GlcNAc...) asparagine; by host glycans are attached at residues N759 and N791. Residues T1011 and T1012 are each glycosylated (O-linked (GalNAc...) threonine; by host). A helical membrane pass occupies residues 1029-1049 (WWQLTLGAICALLLAGLLACC). Topologically, residues 1050–1063 (AKCLYYLRGAIAPR) are cytoplasmic.

Homodimer; further assembles into homooligomer. Interacts with human C1QBP. Interacts (via N-terminus) with protease/methyltransferase p150. In terms of assembly, heterodimer with spike glycoprotein E2. As to quaternary structure, heterodimer with spike glycoprotein E1. Post-translationally, structural polyprotein: Specific enzymatic cleavages in vivo yield mature proteins. Two signal peptidase-mediated cleavages within the polyprotein produce the structural proteins capsid, E2, and E1. The E2 signal peptide remains attached to the C-terminus of the capsid protein after cleavage by the signal peptidase. Another signal peptide at E2 C-terminus directs E1 to the ER, with a similar mechanism. Contains three N-linked oligosaccharides. In terms of processing, capsid is phosphorylated on Ser-46 by host. This phosphorylation negatively regulates capsid protein RNA-binding activity. Dephosphorylated by human PP1A.

It is found in the virion. Its subcellular location is the host cytoplasm. It localises to the host mitochondrion. The protein resides in the virion membrane. The protein localises to the host Golgi apparatus membrane. Its function is as follows. Capsid protein interacts with genomic RNA and assembles into icosahedric core particles 65-70 nm in diameter. The resulting nucleocapsid eventually associates with the cytoplasmic domain of E2 at the cell membrane, leading to budding and formation of mature virions from host Golgi membranes. Phosphorylation negatively regulates RNA-binding activity, possibly delaying virion assembly during the viral replication phase. Capsid protein dimerizes and becomes disulfide-linked in the virion. Modulates genomic RNA replication. Modulates subgenomic RNA synthesis by interacting with human C1QBP/SF2P32. Induces both perinuclear clustering of mitochondria and the formation of electron-dense intermitochondrial plaques, both hallmarks of rubella virus infected cells. Induces apoptosis when expressed in transfected cells. In terms of biological role, responsible for viral attachment to target host cell, by binding to the cell receptor. Its transport to the plasma membrane depends on interaction with E1 protein. The surface glycoproteins display an irregular helical organization and a pseudo-tetrameric inner nucleocapsid arrangement. Class II viral fusion protein. Fusion activity is inactive as long as E1 is bound to E2 in mature virion. After virus attachment to target cell and clathrin-mediated endocytosis, acidification of the endosome would induce dissociation of E1/E2 heterodimer and concomitant trimerization of the E1 subunits. This E1 homotrimer is fusion active, and promotes release of viral nucleocapsid in cytoplasm after endosome and viral membrane fusion. The cytoplasmic tail of spike glycoprotein E1 modulates virus release. The surface glycoproteins display an irregular helical organization and a pseudo-tetrameric inner nucleocapsid arrangement. This chain is Structural polyprotein, found in Homo sapiens (Human).